The sequence spans 174 residues: Eukaryotic translation elongation factor 1 epsilon-1 (174 aa).

Ala2 bears the N-acetylalanine mark. The segment at 2-56 (AAAAELSLLEKSLGLSKGNKYSAQGERQIPVLQTNNGPSLTGLTTIAAHLVKQAN) is N-terminal. Residues 50–173 (HLVKQANKEY…FIKNRLYTNS (124 aa)) form the GST C-terminal domain. The linker stretch occupies residues 57 to 63 (KEYLLGS). The interval 64-152 (TAEEKAIVQQ…SRWFCHIQHY (89 aa)) is C-terminal. Residue Lys138 is modified to N6-acetyllysine. Positions 153–169 (PGIRQHLSSVVFIKNRL) form a coiled coil.

In terms of assembly, part of a multisubunit complex that groups tRNA ligases for Arg (RARS1), Asp (DARS1), Gln (QARS1), Ile (IARS1), Leu (LARS1), Lys (KARS1), Met (MARS1) the bifunctional ligase for Glu and Pro (EPRS1) and the auxiliary subunits AIMP1/p43, AIMP2/p38 and EEF1E1/p18. Can interact simultaneously with MARS1 and EPRS1. Forms a linear complex that contains MARS1, EEF1E1, EPRS1 and AIMP2 that is at the core of the multisubunit complex. Interacts with ATM and ATR. The interaction with ATM, which takes place independently of TP53, is induced by DNA damage that may occur during genotoxic stress or cell growth. The interaction with ATR is enhanced by UV irradiation. In terms of tissue distribution, down-regulated in various cancer tissues.

It is found in the cytoplasm. Its subcellular location is the cytosol. The protein localises to the nucleus. Positive modulator of ATM response to DNA damage. This chain is Eukaryotic translation elongation factor 1 epsilon-1 (EEF1E1), found in Homo sapiens (Human).